The following is a 449-amino-acid chain: MKLTQRLSLRVRLTLIFLILVSITWAISSFVAWRKTTDNVDELFDTQLMLFARRLSTLDLNEINAPQRMAHTPKKLKHGHIDDDALAFAIFSADGKMLLHDGDNGQDIPYRYRREGFDNGYLKDDNDLWRFLWLNSADGKYRIVVGQEWDYREDMALAIVAAQLTPWLIALPFMLLILLLLLHRELRPLKKLAQALRFRSPESETPLDAKGVPSEVRPLVEALNQLFSRIHSMMVRERRFTSDAAHELRSPLAALKVQTEVAQLSGDDPLSRDKALTQLHAGIDRATRLVDQLLTLSRLDSLNNLQDVAEISLEELLQSAVMDIYHPAQQANIDVRLQLNAHDVIRTGQPLLLSLLVRNLLDNAIRYSPQGSVVDVTLHARSFTVRDNGPGVAPEILTHIGERFYRPPGQSVTGSGLGLSIVRRIATLHGMTVSFGNAAEGGFEAVVSW.

The Cytoplasmic segment spans residues 1–12 (MKLTQRLSLRVR). The chain crosses the membrane as a helical span at residues 13 to 33 (LTLIFLILVSITWAISSFVAW). At 34-161 (RKTTDNVDEL…REDMALAIVA (128 aa)) the chain is on the periplasmic side. Residues 162 to 182 (AQLTPWLIALPFMLLILLLLL) traverse the membrane as a helical segment. The HAMP domain maps to 183–235 (HRELRPLKKLAQALRFRSPESETPLDAKGVPSEVRPLVEALNQLFSRIHSMMV). The Cytoplasmic portion of the chain corresponds to 183-449 (HRELRPLKKL…EGGFEAVVSW (267 aa)). A Histidine kinase domain is found at 243–449 (DAAHELRSPL…EGGFEAVVSW (207 aa)). At H246 the chain carries Phosphohistidine; by autocatalysis.

The protein localises to the cell inner membrane. It catalyses the reaction ATP + protein L-histidine = ADP + protein N-phospho-L-histidine.. Functionally, member of a two-component regulatory system QseB/QseC. Activates the flagella regulon by activating transcription of FlhDC. May activate QseB by phosphorylation. This is Sensor protein QseC (qseC) from Salmonella typhimurium (strain LT2 / SGSC1412 / ATCC 700720).